Here is a 162-residue protein sequence, read N- to C-terminus: UPF0303 protein Arad_3071 (162 aa).

Belongs to the UPF0303 family.

The polypeptide is UPF0303 protein Arad_3071 (Rhizobium rhizogenes (strain K84 / ATCC BAA-868) (Agrobacterium radiobacter)).